The sequence spans 353 residues: Galectin-9 (353 aa).

The Galectin 1 domain occupies 17 to 147; the sequence is FTGPIQGGLQ…CLKLSFITFQ (131 aa). A beta-D-galactoside contacts are provided by residues N47, H60, R64, N74, and 81 to 87; that span reads WGPEERK. A disordered region spans residues 167-186; sequence QFPRTPKGRKQKTQNFRPAH. The 129-residue stretch at 225 to 353 folds into the Galectin 2 domain; it reads FYTPIPNGLY…GDIQLTHVQT (129 aa). A beta-D-galactoside is bound by residues H265, R269, T279, and 285-291; that span reads WGQEERS.

Homodimer. Accentuated expression in liver and thymus of embryo, detected in embryonic heart, brain, lung, liver, and kidney. Highly expressed in adult thymus, small intestine, and liver, and to a lesser extent in lung, kidney, spleen, cardiac, and skeletal muscle. Barely detectable in brain and reticulocyte. Expressed in placenta, uterus and decidua during pregnancy. Expressed in CD4+ T-cells with higher levels in iTreg cells than other T-cell types and sustained high levels throughout iTreg cell differentiation (at protein level). Expressed in myeloid cells in lung. Constitutively expressed in microglia. Isoform 1 is expressed exclusively in the small intestine. Isoform 2 expression in decidua increases in pathological pregnancy from gestation day 7.5 to 13.5 and it is higher than in normal pregnancy. Isoform 3 expression in decidua is higher in normal pregnancy than in pathological pregnancy.

It localises to the cytoplasm. The protein localises to the nucleus. Its subcellular location is the secreted. Its function is as follows. Binds galactosides. Has high affinity for the Forssman pentasaccharide. Ligand for HAVCR2/TIM3. Binding to HAVCR2 induces T-helper type 1 lymphocyte (Th1) death. Also stimulates bactericidal activity in infected macrophages by causing macrophage activation and IL1B secretion which restricts intracellular bacterial growth. Ligand for P4HB; the interaction retains P4HB at the cell surface of Th2 T-helper cells, increasing disulfide reductase activity at the plasma membrane, altering the plasma membrane redox state and enhancing cell migration. Ligand for CD44; the interaction enhances binding of SMAD3 to the FOXP3 promoter, leading to up-regulation of FOXP3 expression and increased induced regulatory T (iTreg) cell stability and suppressive function. Promotes ability of mesenchymal stromal cells to suppress T-cell proliferation. Expands regulatory T-cells and induces cytotoxic T-cell apoptosis following virus infection. Activates ERK1/2 phosphorylation inducing cytokine (IL-6, IL-8, IL-12) and chemokine (CCL2) production in mast and dendritic cells. Inhibits degranulation and induces apoptosis of mast cells. Induces maturation and migration of dendritic cells. Inhibits natural killer (NK) cell function. Can transform NK cell phenotype from peripheral to decidual during pregnancy. Astrocyte derived galectin-9 enhances microglial TNF production. May play a role in thymocyte-epithelial interactions relevant to the biology of the thymus. May provide the molecular basis for urate flux across cell membranes, allowing urate that is formed during purine metabolism to efflux from cells and serving as an electrogenic transporter that plays an important role in renal and gastrointestinal urate excretion. Highly selective to the anion urate. In terms of biological role, acts as an eosinophil chemoattractant. It also inhibits angiogenesis. Suppresses IFNG production by natural killer cells. The sequence is that of Galectin-9 (Lgals9) from Mus musculus (Mouse).